The following is an 813-amino-acid chain: Polycomb group protein FERTILIZATION-INDEPENDENT SEED 2 (813 aa).

Residues 1–27 (MARKSIRGKEVVMVSDDDDDDDDVDDD) are disordered. Residues 15–26 (SDDDDDDDDVDD) show a composition bias toward acidic residues. A C2H2-type zinc finger spans residues 134 to 155 (CPFCLIPCGGHEGLQLHLKSSH). Disordered stretches follow at residues 197-216 (SPLTFCSKNRNQRRQRDDSN), 232-261 (DLPRGTENDSTHVNDDNVSSPPRAHSSEKI), and 274-648 (ESSE…RKEL). Basic and acidic residues predominate over residues 232–246 (DLPRGTENDSTHVND). The stretch at 243–264 (HVNDDNVSSPPRAHSSEKISDI) is one A-1 repeat. Residues 243–542 (HVNDDNVSSP…HSSKKNKSTR (300 aa)) are 12 X approximate repeat A. The stretch at 265 to 281 (LTTTQLAIAESSEPKVP) is one B-1 repeat. The tract at residues 265 to 640 (LTTTQLAIAE…KAEPSEPKVT (376 aa)) is 7 X approximate repeat B. The stretch at 282–304 (HVNDGNVSSPPRAHSSAEKNEST) is one A-2 repeat. Composition is skewed to basic and acidic residues over residues 296-307 (SSAEKNESTHVN), 319-331 (HSLEKNESTHVNE), and 344-353 (KKNESTHMND). The stretch at 305 to 327 (HVNDDDDVSSPPRAHSLEKNEST) is one A-3 repeat. Residues 328 to 349 (HVNEDNISSPPKAHSSKKNEST) form an A-4 repeat. One copy of the A-5 repeat lies at 350-371 (HMNDEDVSFPPRTRSSKETSDI). Residues 372–388 (LTTTQPAIVEPSEPKVR) form a B-2 repeat. The span at 388-402 (RRGSRRKQLYAKRYK) shows a compositional bias: basic residues. Residues 403 to 419 (ARETQPAIAESSEPKVL) form a B-3 repeat. Basic and acidic residues-rich tracts occupy residues 414-423 (SEPKVLHVND) and 453-462 (SEPKVPHVND). The stretch at 420–441 (HVNDENVSSPPEAHSLEKASDI) is one A-6 repeat. The stretch at 442–458 (LTTTQPAIAESSEPKVP) is one B-4 repeat. Residues 459–481 (HVNDENVSSTPRAHSSKKNKSTR) form an A-7 repeat. Residues 472-481 (HSSKKNKSTR) show a composition bias toward basic residues. Residues 482-502 (KNVDNVPSPPKTRSSKKTSDI) form an A-8 repeat. Residues 501–512 (DILTTTQPTIAE) show a composition bias toward polar residues. The B-5 repeat unit spans residues 503–519 (LTTTQPTIAESSEPKVR). A compositionally biased stretch (basic and acidic residues) spans 514–523 (SEPKVRHVND). The A-9 repeat unit spans residues 520–542 (HVNDDNVSSTPRAHSSKKNKSTR). An A-10 repeat occupies 543-563 (KNDDNIPSPPKTRSSKKTSNI). The B-6 repeat unit spans residues 564-579 (LTRTQPAIAESEPKVP). Over residues 574 to 586 (SEPKVPHVNDDKV) the composition is skewed to basic and acidic residues. Residues 580–601 (HVNDDKVSSTPRAHSSKKNKST) form an A-11 repeat. Basic residues predominate over residues 593 to 602 (HSSKKNKSTH). Residues 602-623 (HKKDDNASLPPKTRSSKKTSDI) form an A-12 repeat. A B-7 repeat occupies 624–640 (LATTQPAKAEPSEPKVT). The VEFS-box stretch occupies residues 648 to 783 (LHAERCEAKR…CAKTFHKCTT (136 aa)).

It belongs to the VEFS (VRN2-EMF2-FIS2-SU(Z)12) family. In terms of assembly, probably indirectly associated with FIE and/or MEA. In plants, PcG complexes are probably composed of a member of the EZ family (CLF or MEA), FIE, and a member of the VEFS family (FIS2, VRN2 or EMF2). In terms of tissue distribution, weakly expressed. Expressed in late siliques.

Its subcellular location is the nucleus. In terms of biological role, polycomb group (PcG) protein. PcG proteins act by forming multiprotein complexes, which are required to maintain the transcriptionally repressive state of homeotic genes throughout development. PcG proteins are not required to initiate repression, but to maintain it during later stages of development. They probably act via the methylation of histones, rendering chromatin heritably changed in its expressibility. Required to prevent the proliferation of the central cell by repressing unknown target genes before fertilization. Regulates the anteroposterior organization of the endosperm. The polypeptide is Polycomb group protein FERTILIZATION-INDEPENDENT SEED 2 (Arabidopsis thaliana (Mouse-ear cress)).